The sequence spans 109 residues: Iron-sulfur assembly protein IscA-like 3, mitochondrial (109 aa).

Residues 1 to 18 constitute a mitochondrion transit peptide; sequence MRKQVLALSDTAAARIRQ. Fe cation is bound by residues Cys-37, Cys-100, and Cys-102.

It belongs to the HesB/IscA family. In terms of assembly, homodimer; may form tetramers and higher multimers. Fe cation is required as a cofactor.

It is found in the mitochondrion. Functionally, involved in the assembly of mitochondrial iron-sulfur proteins. Probably involved in the binding of an intermediate of Fe/S cluster assembly. This is Iron-sulfur assembly protein IscA-like 3, mitochondrial from Arabidopsis thaliana (Mouse-ear cress).